We begin with the raw amino-acid sequence, 248 residues long: Proteasome subunit alpha type-1 (248 aa).

The protein belongs to the peptidase T1A family. The 26S proteasome consists of a 20S proteasome core and two 19S regulatory subunits. The 20S proteasome core is composed of 28 subunits that are arranged in four stacked rings, resulting in a barrel-shaped structure. The two end rings are each formed by seven alpha subunits, and the two central rings are each formed by seven beta subunits. The catalytic chamber with the active sites is on the inside of the barrel.

It localises to the cytoplasm. Its subcellular location is the nucleus. The proteasome is a multicatalytic proteinase complex which is characterized by its ability to cleave peptides with Arg, Phe, Tyr, Leu, and Glu adjacent to the leaving group at neutral or slightly basic pH. The proteasome has an ATP-dependent proteolytic activity. This is Proteasome subunit alpha type-1 (psmA1) from Dictyostelium discoideum (Social amoeba).